Consider the following 386-residue polypeptide: Phosphoglycerate kinase (386 aa).

Substrate-binding positions include 21-23 (DLN), Arg36, 59-62 (HLGR), Arg112, and Arg145. ATP contacts are provided by residues Lys196, Glu313, and 339-342 (GGDT).

This sequence belongs to the phosphoglycerate kinase family. In terms of assembly, monomer.

The protein resides in the cytoplasm. The enzyme catalyses (2R)-3-phosphoglycerate + ATP = (2R)-3-phospho-glyceroyl phosphate + ADP. It participates in carbohydrate degradation; glycolysis; pyruvate from D-glyceraldehyde 3-phosphate: step 2/5. In Haemophilus influenzae (strain ATCC 51907 / DSM 11121 / KW20 / Rd), this protein is Phosphoglycerate kinase (pgk).